The sequence spans 580 residues: Arginine--tRNA ligase (580 aa).

Residues 131 to 141 (ANPTGPLHVGH) carry the 'HIGH' region motif.

The protein belongs to the class-I aminoacyl-tRNA synthetase family. In terms of assembly, monomer.

It localises to the cytoplasm. The enzyme catalyses tRNA(Arg) + L-arginine + ATP = L-arginyl-tRNA(Arg) + AMP + diphosphate. In Ruegeria sp. (strain TM1040) (Silicibacter sp.), this protein is Arginine--tRNA ligase.